We begin with the raw amino-acid sequence, 358 residues long: Oxidase FUB9 (358 aa).

One can recognise an FMN hydroxy acid dehydrogenase domain in the interval 6 to 350; the sequence is SSKPQIFSIQ…SPAHLSILNA (345 aa). Tyr32 serves as a coordination point for a 2-oxocarboxylate. Residues Ser114, Gln138, and Thr166 each coordinate FMN. Arg175 provides a ligand contact to a 2-oxocarboxylate. Lys221 provides a ligand contact to FMN. Residue His245 is the Proton acceptor of the active site. Arg248 contacts a 2-oxocarboxylate. FMN is bound by residues 276–280 and 299–300; these read DGGFR and GR.

Belongs to the FMN-dependent alpha-hydroxy acid dehydrogenase family. The cofactor is FMN.

Its pathway is mycotoxin biosynthesis. Oxidase; part of the gene cluster that mediates the biosynthesis of fusaric acid, a mycotoxin with low to moderate toxicity to animals and humans, but with high phytotoxic properties. L-aspartate is suggested as fusaric acid amino acid precursor that is activated and further processed to O-acetyl-L-homoserine by cluster enzymes aspartate kinase FUB3 and homoserine O-acetyltransferase FUB5, as well as enzymes of the primary metabolism. The polyketide synthase (PKS) FUB1 generates the triketide trans-2-hexenal which is presumptively released by the hydrolase FUB4 and linked to the NRPS-bound amino acid precursor by NAD(P)-dependent dehydrogenase FUB6. FUB1, FUB4, and the non-canonical NRPS Fub8 may form an enzyme complex. Further processing of the NRPS-bound intermediate might be carried out by FUB6 and the sulfhydrylase FUB7, enabling a spontaneous electrocyclization to close the carbon backbone of fusaric acid. Dihydrofusaric acid is likely to be released via reduction by the thioester reductase (TR) domain of FUB8 whereupon the final oxidation to fusaric acid may (also) be performed by the FMN-dependent dehydrogenase FUB9. The polypeptide is Oxidase FUB9 (Gibberella fujikuroi (strain CBS 195.34 / IMI 58289 / NRRL A-6831) (Bakanae and foot rot disease fungus)).